The primary structure comprises 146 residues: Ribonuclease H (146 aa).

An RNase H type-1 domain is found at 1–143 (MKEIIIYTDG…CDQLARNAIK (143 aa)). Aspartate 9, glutamate 47, aspartate 70, and aspartate 135 together coordinate Mg(2+).

It belongs to the RNase H family. Monomer. It depends on Mg(2+) as a cofactor.

The protein localises to the cytoplasm. The catalysed reaction is Endonucleolytic cleavage to 5'-phosphomonoester.. Its function is as follows. Endonuclease that specifically degrades the RNA of RNA-DNA hybrids. This chain is Ribonuclease H, found in Syntrophomonas wolfei subsp. wolfei (strain DSM 2245B / Goettingen).